A 187-amino-acid polypeptide reads, in one-letter code: Ribosome-recycling factor (187 aa).

Belongs to the RRF family.

The protein resides in the cytoplasm. Functionally, responsible for the release of ribosomes from messenger RNA at the termination of protein biosynthesis. May increase the efficiency of translation by recycling ribosomes from one round of translation to another. This Methylorubrum populi (strain ATCC BAA-705 / NCIMB 13946 / BJ001) (Methylobacterium populi) protein is Ribosome-recycling factor.